Here is a 296-residue protein sequence, read N- to C-terminus: Bifunctional protein FolD (296 aa).

NADP(+) contacts are provided by residues 166-168 (GRS), Ser191, and Ile232.

Belongs to the tetrahydrofolate dehydrogenase/cyclohydrolase family. In terms of assembly, homodimer.

It catalyses the reaction (6R)-5,10-methylene-5,6,7,8-tetrahydrofolate + NADP(+) = (6R)-5,10-methenyltetrahydrofolate + NADPH. The enzyme catalyses (6R)-5,10-methenyltetrahydrofolate + H2O = (6R)-10-formyltetrahydrofolate + H(+). It functions in the pathway one-carbon metabolism; tetrahydrofolate interconversion. Catalyzes the oxidation of 5,10-methylenetetrahydrofolate to 5,10-methenyltetrahydrofolate and then the hydrolysis of 5,10-methenyltetrahydrofolate to 10-formyltetrahydrofolate. This Cereibacter sphaeroides (strain ATCC 17029 / ATH 2.4.9) (Rhodobacter sphaeroides) protein is Bifunctional protein FolD.